A 727-amino-acid polypeptide reads, in one-letter code: 1,4-alpha-glucan branching enzyme GlgB (727 aa).

D405 acts as the Nucleophile in catalysis. The Proton donor role is filled by E458.

Belongs to the glycosyl hydrolase 13 family. GlgB subfamily. In terms of assembly, monomer.

The enzyme catalyses Transfers a segment of a (1-&gt;4)-alpha-D-glucan chain to a primary hydroxy group in a similar glucan chain.. It functions in the pathway glycan biosynthesis; glycogen biosynthesis. Catalyzes the formation of the alpha-1,6-glucosidic linkages in glycogen by scission of a 1,4-alpha-linked oligosaccharide from growing alpha-1,4-glucan chains and the subsequent attachment of the oligosaccharide to the alpha-1,6 position. The polypeptide is 1,4-alpha-glucan branching enzyme GlgB (Yersinia pseudotuberculosis serotype O:1b (strain IP 31758)).